The primary structure comprises 230 residues: Iron-dependent repressor IdeR (230 aa).

In terms of domain architecture, HTH dtxR-type spans L4 to T65.

This sequence belongs to the DtxR/MntR family. In terms of assembly, homodimer.

The protein localises to the cytoplasm. Functionally, metal-dependent DNA-binding protein that controls transcription of many genes involved in iron metabolism. This Mycobacterium leprae (strain TN) protein is Iron-dependent repressor IdeR (ideR).